Consider the following 376-residue polypeptide: uncharacterized protein (376 aa).

Belongs to the choline/ethanolamine kinase family.

This is an uncharacterized protein from Caenorhabditis elegans.